Reading from the N-terminus, the 945-residue chain is Protein translocase subunit SecA (945 aa).

Residues Gln90, 108 to 112, and Asp509 each bind ATP; that span reads GEGKT. Residues 533 to 568 form a disordered region; the sequence is VKPEDGHKPPVPLQRRSESSGFGEDKDVTTDNSKPL. The segment covering 547-561 has biased composition (basic and acidic residues); that stretch reads RRSESSGFGEDKDVT.

This sequence belongs to the SecA family. As to quaternary structure, monomer and homodimer. Part of the essential Sec protein translocation apparatus which comprises SecA, SecYEG and auxiliary proteins SecDF. Other proteins may also be involved.

It is found in the cell inner membrane. The protein resides in the cellular thylakoid membrane. It localises to the cytoplasm. It carries out the reaction ATP + H2O + cellular proteinSide 1 = ADP + phosphate + cellular proteinSide 2.. Functionally, part of the Sec protein translocase complex. Interacts with the SecYEG preprotein conducting channel. Has a central role in coupling the hydrolysis of ATP to the transfer of proteins into and across the cell membrane, serving as an ATP-driven molecular motor driving the stepwise translocation of polypeptide chains across the membrane. Probably participates in protein translocation into and across both the cytoplasmic and thylakoid membranes in cyanobacterial cells. This Prochlorococcus marinus (strain MIT 9211) protein is Protein translocase subunit SecA.